The following is a 202-amino-acid chain: MAPIFRSTSLIAFSLFFFFFASTLPISSGSEDSYTITGRVRVPASTVIGHAAKFSNIKVILNGGQHVTFLRPDGYFTFHKVPAGTHLIEVYALGYFFSPVRVDVSARHRGKVQATLTETRRSLTELVLEPLRAEQYYEMREPFSVMSIVKSPMGLMVGFMVVVVFLMPKLMENIDPEEMKSAQEQMRSQGVPSLTSLLPASR.

Residues 1 to 23 (MAPIFRSTSLIAFSLFFFFFAST) form the signal peptide. The helical transmembrane segment at 148–168 (IVKSPMGLMVGFMVVVVFLMP) threads the bilayer. The interval 179-202 (MKSAQEQMRSQGVPSLTSLLPASR) is disordered. Residues 182–202 (AQEQMRSQGVPSLTSLLPASR) are compositionally biased toward polar residues.

This sequence belongs to the EMC7 family.

The protein resides in the membrane. This is ER membrane protein complex subunit 7 homolog from Arabidopsis thaliana (Mouse-ear cress).